The following is a 73-amino-acid chain: Exodeoxyribonuclease 7 small subunit (73 aa).

It belongs to the XseB family. Heterooligomer composed of large and small subunits.

The protein localises to the cytoplasm. The enzyme catalyses Exonucleolytic cleavage in either 5'- to 3'- or 3'- to 5'-direction to yield nucleoside 5'-phosphates.. Functionally, bidirectionally degrades single-stranded DNA into large acid-insoluble oligonucleotides, which are then degraded further into small acid-soluble oligonucleotides. The protein is Exodeoxyribonuclease 7 small subunit of Streptococcus mutans serotype c (strain ATCC 700610 / UA159).